Reading from the N-terminus, the 293-residue chain is Glutamyl-Q tRNA(Asp) synthetase (293 aa).

L-glutamate is bound by residues 8 to 12 and Glu44; that span reads RFAPT. The 'HIGH' region motif lies at 11–21; that stretch reads PTPSGYLHFGS. Residues Cys100, Cys102, Tyr114, and Cys118 each coordinate Zn(2+). 2 residues coordinate L-glutamate: Tyr171 and Arg189. The 'KMSKS' region signature appears at 227-231; it reads KLGKS. An ATP-binding site is contributed by Lys230.

This sequence belongs to the class-I aminoacyl-tRNA synthetase family. GluQ subfamily. It depends on Zn(2+) as a cofactor.

Catalyzes the tRNA-independent activation of glutamate in presence of ATP and the subsequent transfer of glutamate onto a tRNA(Asp). Glutamate is transferred on the 2-amino-5-(4,5-dihydroxy-2-cyclopenten-1-yl) moiety of the queuosine in the wobble position of the QUC anticodon. The polypeptide is Glutamyl-Q tRNA(Asp) synthetase (Pseudomonas aeruginosa (strain ATCC 15692 / DSM 22644 / CIP 104116 / JCM 14847 / LMG 12228 / 1C / PRS 101 / PAO1)).